A 373-amino-acid polypeptide reads, in one-letter code: Probable peptidoglycan glycosyltransferase FtsW (373 aa).

Transmembrane regions (helical) follow at residues 15-35 (LVIL…VYSA), 48-68 (FYFL…MAVA), 80-100 (AVPI…PGIG), 144-164 (FFST…LILL), 168-188 (DLGA…AAGT), 192-212 (YIIA…MNVD), 278-298 (LGLI…LRGV), 311-331 (FLAF…MAVV), and 342-362 (LPFI…VGIL).

Belongs to the SEDS family. FtsW subfamily.

The protein resides in the cell inner membrane. It catalyses the reaction [GlcNAc-(1-&gt;4)-Mur2Ac(oyl-L-Ala-gamma-D-Glu-L-Lys-D-Ala-D-Ala)](n)-di-trans,octa-cis-undecaprenyl diphosphate + beta-D-GlcNAc-(1-&gt;4)-Mur2Ac(oyl-L-Ala-gamma-D-Glu-L-Lys-D-Ala-D-Ala)-di-trans,octa-cis-undecaprenyl diphosphate = [GlcNAc-(1-&gt;4)-Mur2Ac(oyl-L-Ala-gamma-D-Glu-L-Lys-D-Ala-D-Ala)](n+1)-di-trans,octa-cis-undecaprenyl diphosphate + di-trans,octa-cis-undecaprenyl diphosphate + H(+). It participates in cell wall biogenesis; peptidoglycan biosynthesis. Peptidoglycan polymerase that is essential for cell division. The protein is Probable peptidoglycan glycosyltransferase FtsW of Geobacter sulfurreducens (strain DL-1 / KN400).